Here is a 111-residue protein sequence, read N- to C-terminus: Large ribosomal subunit protein uL23 (111 aa).

It belongs to the universal ribosomal protein uL23 family. Part of the 50S ribosomal subunit. Contacts protein L29, and trigger factor when it is bound to the ribosome.

One of the early assembly proteins it binds 23S rRNA. One of the proteins that surrounds the polypeptide exit tunnel on the outside of the ribosome. Forms the main docking site for trigger factor binding to the ribosome. The chain is Large ribosomal subunit protein uL23 from Nitrosospira multiformis (strain ATCC 25196 / NCIMB 11849 / C 71).